The primary structure comprises 1024 residues: RNA cytidine acetyltransferase (1024 aa).

An ATP-binding site is contributed by 287-296 (GRGKSAALGL). K426 carries the post-translational modification N6-acetyllysine. R470 contributes to the ATP binding site. The N-acetyltransferase domain occupies 558–753 (CLLPPVPPTQ…HSCIMLKTLA (196 aa)). Acetyl-CoA contacts are provided by residues 629-631 (IAV) and 636-642 (QGMGYGS). Positions 702–1024 (PAERLDYLGV…RKDMKLKRKK (323 aa)) are required for localization to the nucleolus and midbody. T716 carries the phosphothreonine modification. Residue R725 coordinates acetyl-CoA. Phosphoserine occurs at positions 934, 984, and 987. The segment at 990–1024 (SDKKRKLETKQEPKQSKKLKKRDNNRKDMKLKRKK) is disordered. Residues 1005 to 1024 (SKKLKKRDNNRKDMKLKRKK) show a composition bias toward basic residues.

Belongs to the RNA cytidine acetyltransferase family. NAT10 subfamily. Part of the small subunit (SSU) processome, composed of more than 70 proteins and the RNA chaperone small nucleolar RNA (snoRNA) U3. Interacts with THUMPD1. Interacts with SUN1 (via N-terminus). Interacts with TERT.

It is found in the nucleus. Its subcellular location is the nucleolus. The enzyme catalyses a cytidine in 18S rRNA + acetyl-CoA + ATP + H2O = an N(4)-acetylcytidine in 18S rRNA + ADP + phosphate + CoA + H(+). The catalysed reaction is a cytidine in tRNA + acetyl-CoA + ATP + H2O = an N(4)-acetylcytidine in tRNA + ADP + phosphate + CoA + H(+). It carries out the reaction a cytidine in mRNA + acetyl-CoA + ATP + H2O = an N(4)-acetylcytidine in mRNA + ADP + phosphate + CoA + H(+). Its function is as follows. RNA cytidine acetyltransferase that catalyzes the formation of N(4)-acetylcytidine (ac4C) modification on mRNAs, 18S rRNA and tRNAs. Catalyzes ac4C modification of a broad range of mRNAs, enhancing mRNA stability and translation. mRNA ac4C modification is frequently present within wobble cytidine sites and promotes translation efficiency. Mediates the formation of ac4C at position 1842 in 18S rRNA. May also catalyze the formation of ac4C at position 1337 in 18S rRNA. Required for early nucleolar cleavages of precursor rRNA at sites A0, A1 and A2 during 18S rRNA synthesis. Catalyzes the formation of ac4C in serine and leucine tRNAs. Requires the tRNA-binding adapter protein THUMPD1 for full tRNA acetyltransferase activity but not for 18S rRNA acetylation. In addition to RNA acetyltransferase activity, also able to acetylate lysine residues of proteins, such as histones, microtubules, p53/TP53 and MDM2, in vitro. The relevance of the protein lysine acetyltransferase activity is however unsure in vivo. Activates telomerase activity by stimulating the transcription of TERT, and may also regulate telomerase function by affecting the balance of telomerase subunit assembly, disassembly, and localization. Involved in the regulation of centrosome duplication by acetylating CENATAC during mitosis, promoting SASS6 proteasome degradation. Part of the small subunit (SSU) processome, first precursor of the small eukaryotic ribosomal subunit. During the assembly of the SSU processome in the nucleolus, many ribosome biogenesis factors, an RNA chaperone and ribosomal proteins associate with the nascent pre-rRNA and work in concert to generate RNA folding, modifications, rearrangements and cleavage as well as targeted degradation of pre-ribosomal RNA by the RNA exosome. The protein is RNA cytidine acetyltransferase of Mus musculus (Mouse).